A 349-amino-acid chain; its full sequence is Protein RecA (349 aa).

Position 65-72 (65-72) interacts with ATP; the sequence is GPESSGKT.

It belongs to the RecA family.

The protein localises to the cytoplasm. Functionally, can catalyze the hydrolysis of ATP in the presence of single-stranded DNA, the ATP-dependent uptake of single-stranded DNA by duplex DNA, and the ATP-dependent hybridization of homologous single-stranded DNAs. It interacts with LexA causing its activation and leading to its autocatalytic cleavage. This chain is Protein RecA, found in Aliarcobacter butzleri (strain RM4018) (Arcobacter butzleri).